A 37-amino-acid chain; its full sequence is Photosystem I reaction center subunit IX (37 aa).

A helical membrane pass occupies residues 4-24 (FLTTAPVVAAIWFTLTAGILI).

It belongs to the PsaJ family.

The protein localises to the cellular thylakoid membrane. Functionally, may help in the organization of the PsaE and PsaF subunits. The polypeptide is Photosystem I reaction center subunit IX (Synechococcus sp. (strain WH7803)).